The following is a 129-amino-acid chain: Large ribosomal subunit protein uL22 (129 aa).

It belongs to the universal ribosomal protein uL22 family. In terms of assembly, part of the 50S ribosomal subunit.

This protein binds specifically to 23S rRNA; its binding is stimulated by other ribosomal proteins, e.g. L4, L17, and L20. It is important during the early stages of 50S assembly. It makes multiple contacts with different domains of the 23S rRNA in the assembled 50S subunit and ribosome. In terms of biological role, the globular domain of the protein is located near the polypeptide exit tunnel on the outside of the subunit, while an extended beta-hairpin is found that lines the wall of the exit tunnel in the center of the 70S ribosome. The protein is Large ribosomal subunit protein uL22 of Rhizobium meliloti (strain 1021) (Ensifer meliloti).